The sequence spans 446 residues: 5-hydroxytryptamine receptor (446 aa).

At 1 to 65 the chain is on the extracellular side; it reads MEGAEGQEEL…AALVRAAAKA (65 aa). N-linked (GlcNAc...) asparagine glycans are attached at residues Asn-23, Asn-27, Asn-36, and Asn-42. A helical transmembrane segment spans residues 66-88; the sequence is VVLGLLILATVVGNVFVIAAILL. At 89 to 98 the chain is on the cytoplasmic side; that stretch reads ERHLRSAANN. Residues 99-120 traverse the membrane as a helical segment; it reads LILSLAVADLLVACLVMPLGAV. The Extracellular portion of the chain corresponds to 121–135; sequence YEVVQRWTLGPELCD. A disulfide bond links Cys-134 and Cys-214. Residues 136–157 form a helical membrane-spanning segment; that stretch reads MWTSGDVLCCTASILHLVAIAL. The Cytoplasmic portion of the chain corresponds to 158 to 176; sequence DRYWAVTNIDYIHASTAKR. The helical transmembrane segment at 177–199 threads the bilayer; it reads VGMMIACVWTVSFFVCIAQLLGW. Topologically, residues 200–227 are extracellular; sequence KDPDWNQRVSEDLRCVVSQDVGYQIFAT. A helical transmembrane segment spans residues 228 to 249; that stretch reads ASSFYVPVLIILILYWRIYQTA. Residues 250 to 367 lie on the Cytoplasmic side of the membrane; sequence RKRIRRRRGA…SKRERKAAKT (118 aa). The segment covering 304–324 has biased composition (polar residues); it reads TTTGFTNVSSNNTSPEKQSCA. The disordered stretch occupies residues 304–329; that stretch reads TTTGFTNVSSNNTSPEKQSCANGLEA. The helical transmembrane segment at 368–391 threads the bilayer; sequence LAIITGAFVACWLPFFVLAILVPT. Topologically, residues 392–399 are extracellular; it reads CDCEVSPV. The chain crosses the membrane as a helical span at residues 400 to 422; sequence LTSLSLWLGYFNSTLNPVIYTVF. At 423-446 the chain is on the cytoplasmic side; it reads SPEFRHAFQRLLCGRRVRRRRAPQ.

The protein belongs to the G-protein coupled receptor 1 family.

It localises to the cell membrane. Its function is as follows. This is a receptor for 5-hydroxytryptamine (serotonin), a biogenic hormone that function as a neurotransmitter, a hormone, and a mitogen. The chain is 5-hydroxytryptamine receptor from Bombyx mori (Silk moth).